Here is a 156-residue protein sequence, read N- to C-terminus: CASP-like protein 5C1 (156 aa).

At 1-21 (MENRERAGAGAVGSAGSLGLR) the chain is on the cytoplasmic side. The chain crosses the membrane as a helical span at residues 22 to 42 (VGQAVFSSASLLFMSVGVEFF). Residues 43–46 (SYTA) are Extracellular-facing. The helical transmembrane segment at 47 to 67 (FCFLVTIMGLVIPWSCTLAMI) threads the bilayer. Residues 68 to 81 (DVYSILVGCPLRVP) are Cytoplasmic-facing. Residues 82-102 (GVMVIVVIGDWVLAILSLAAA) traverse the membrane as a helical segment. The Extracellular portion of the chain corresponds to 103–132 (SSSAAVIDLLLQFHGSHCSPRFCGRYQLSA). A helical membrane pass occupies residues 133–153 (MMAFLSWFLTAASSLFNLWFI). Residues 154-156 (ASR) lie on the Cytoplasmic side of the membrane.

It belongs to the Casparian strip membrane proteins (CASP) family. As to quaternary structure, homodimer and heterodimers.

It is found in the cell membrane. The protein is CASP-like protein 5C1 of Oryza sativa subsp. japonica (Rice).